The primary structure comprises 338 residues: Peptidoglycan deacetylase-like protein FGM2 (338 aa).

Positions 49, 124, and 128 each coordinate Zn(2+). The region spanning 65–257 is the NodB homology domain; that stretch reads LSDYSAGIFA…VTNSHGFVSS (193 aa).

Belongs to the polysaccharide deacetylase family.

In terms of biological role, peptidoglycan deacetylase-like protein; part of the Fg3_54/C64 gene cluster that mediates the biosynthesis of the octapeptide fusaoctaxin A, a virulence factor that is required for cell-to-cell invasiveness of plant host. The 2 nonribosomal peptide synthetases NRPS9 and NRPS5 form an assembly line which likely utilizes GABA as a starter unit (loaded on the unique module M1 of NRPS9) and sequentially incorporates seven extender units composed of the residues L-Ala, L-allo-Ile, L-Ser, L-Val, L-Ser, L-Leu and L-Leu, respectively. During the process, each of the residues that are tethered on modules M3-M7 of NRPS5 containing an E domain can undergo an epimerization reaction to produce a D-configuration before the transpeptidation reaction occurs. The elongation of the peptidyl chain might be terminated by module M8-mediated L-Leu incorporation, followed by R domain-catalyzed 4 electron reduction to release the resulting octapeptide from the assembly line as an alcohol. Fusaoctaxin A is cleaved by the cluster specific ABC transporter FGM5 to the pentapeptide fusapentaxin A and the tripeptide fusatrixin A. The other enzymes from the cluster, FGM1, FGM2, FGM3 and FGM9 seem not to be involved in the biosynthesis of fusaoctaxin A and their functions have still to be determined. The chain is Peptidoglycan deacetylase-like protein FGM2 from Gibberella zeae (strain ATCC MYA-4620 / CBS 123657 / FGSC 9075 / NRRL 31084 / PH-1) (Wheat head blight fungus).